A 261-amino-acid polypeptide reads, in one-letter code: Small ribosomal subunit protein uS2 (261 aa).

Positions 224–261 are disordered; that stretch reads GRQGEDDEAVQQEEVAEGVSKDSLEDLKKTVEEGSNEE. The segment covering 228–239 has biased composition (acidic residues); it reads EDDEAVQQEEVA. The segment covering 242 to 255 has biased composition (basic and acidic residues); it reads VSKDSLEDLKKTVE.

The protein belongs to the universal ribosomal protein uS2 family.

The sequence is that of Small ribosomal subunit protein uS2 (rpsB) from Pediococcus acidilactici.